The sequence spans 385 residues: Non-structural maintenance of chromosomes element 4 homolog A (385 aa).

The disordered stretch occupies residues 1 to 69 (MSGDSSGRGP…PSDSGDEMMD (69 aa)). Basic and acidic residues-rich tracts occupy residues 10–21 (PEGRGRGRDPHR) and 42–55 (SARERREAPERPSL). Over residues 56–68 (EDTEPSDSGDEMM) the composition is skewed to acidic residues. Thr-345 is subject to Phosphothreonine. Position 377 is a phosphoserine (Ser-377).

Belongs to the NSE4 family. As to quaternary structure, component of the SMC5-SMC6 complex which consists at least of SMC5, SMC6, NSMCE2, NSMCE1, NSMCE4A or EID3 and NSMCE3. NSMCE1, NSMCE4A or EID3 and NSMCE3 probably form a subcomplex that bridges the head domains of the SMC5:SMC6 heterodimer. Interacts with NSMCE3.

It localises to the nucleus. The protein localises to the chromosome. Its subcellular location is the telomere. Its function is as follows. Component of the SMC5-SMC6 complex, a complex involved in DNA double-strand breaks by homologous recombination. The complex may promote sister chromatid homologous recombination by recruiting the SMC1-SMC3 cohesin complex to double-strand breaks. The complex is required for telomere maintenance via recombination in ALT (alternative lengthening of telomeres) cell lines and mediates sumoylation of shelterin complex (telosome) components which is proposed to lead to shelterin complex disassembly in ALT-associated PML bodies (APBs). Is involved in positive regulation of response to DNA damage stimulus. This Homo sapiens (Human) protein is Non-structural maintenance of chromosomes element 4 homolog A (NSMCE4A).